The primary structure comprises 236 residues: Large ribosomal subunit protein uL1 (236 aa).

The protein belongs to the universal ribosomal protein uL1 family. In terms of assembly, part of the 50S ribosomal subunit.

In terms of biological role, binds directly to 23S rRNA. The L1 stalk is quite mobile in the ribosome, and is involved in E site tRNA release. Its function is as follows. Protein L1 is also a translational repressor protein, it controls the translation of the L11 operon by binding to its mRNA. This Acidobacterium capsulatum (strain ATCC 51196 / DSM 11244 / BCRC 80197 / JCM 7670 / NBRC 15755 / NCIMB 13165 / 161) protein is Large ribosomal subunit protein uL1.